Consider the following 154-residue polypeptide: Egg-lysin (154 aa).

The signal sequence occupies residues Met-1 to Ser-18.

In terms of assembly, homodimer. As to expression, sperm.

Its function is as follows. Dissolves the egg vitelline layer nonenzymatically during fertilization. It creates a hole of about 3 mu-m in diameter through which the sperm pass. The protein is Egg-lysin of Haliotis kamtschatkana (Pinto abalone).